The chain runs to 392 residues: BURP domain protein RD22 (392 aa).

The first 22 residues, 1–22 (MAIRLPLICLLGSFMVVAIAAD), serve as a signal peptide directing secretion. TXV repeat units follow at residues 56 to 58 (TNV), 78 to 80 (TAV), 100 to 102 (THV), and 125 to 127 (TDV). Residues 57–164 (NVQVGKGGVN…PFVYNYAAKE (108 aa)) form a 5 X approximate repeats region. The interval 61–136 (GKGGVNVNTH…VGVGKGGVTV (76 aa)) is disordered. A compositionally biased stretch (gly residues) spans 94 to 114 (GKPGGGTHVSVGSGKGHGGGV). In terms of domain architecture, BURP spans 176–392 (FFLEKDLVRG…PETHVVWFSY (217 aa)).

Expressed in seed. Highest expression in leaves and guard cells.

In terms of biological role, acts to suppress chlorophyll degradation under moisture stress. This Arabidopsis thaliana (Mouse-ear cress) protein is BURP domain protein RD22.